Reading from the N-terminus, the 927-residue chain is Probable dipeptidyl-aminopeptidase B (927 aa).

Disordered stretches follow at residues Met1–Ile44 and Gly58–Gly101. Residues Met1 to Arg108 lie on the Cytoplasmic side of the membrane. Basic and acidic residues-rich tracts occupy residues His19–Glu36 and Gly58–Glu70. Residues Thr109–Val129 traverse the membrane as a helical; Signal-anchor for type II membrane protein segment. At Ser130–Leu927 the chain is on the vacuolar side. Asn365 and Asn530 each carry an N-linked (GlcNAc...) asparagine glycan. Ser769 (charge relay system) is an active-site residue. Residue Asn828 is glycosylated (N-linked (GlcNAc...) asparagine). Residues Asp846 and His879 each act as charge relay system in the active site.

Belongs to the peptidase S9B family.

It localises to the vacuole membrane. The catalysed reaction is Release of an N-terminal dipeptide, Xaa-Yaa-|-Zaa-, from a polypeptide, preferentially when Yaa is Pro, provided Zaa is neither Pro nor hydroxyproline.. Its function is as follows. Type IV dipeptidyl-peptidase which removes N-terminal dipeptides sequentially from polypeptides having unsubstituted N-termini provided that the penultimate residue is proline. The polypeptide is Probable dipeptidyl-aminopeptidase B (DAPB) (Podospora anserina (strain S / ATCC MYA-4624 / DSM 980 / FGSC 10383) (Pleurage anserina)).